A 388-amino-acid chain; its full sequence is Succinate--CoA ligase [ADP-forming] subunit beta (388 aa).

Residues Lys-46, 53–55 (GRG), Glu-99, Cys-102, and Glu-107 each bind ATP. Mg(2+) contacts are provided by Asn-199 and Asp-213. Residues Asn-264 and 321–323 (GIV) contribute to the substrate site.

It belongs to the succinate/malate CoA ligase beta subunit family. In terms of assembly, heterotetramer of two alpha and two beta subunits. Mg(2+) is required as a cofactor.

It carries out the reaction succinate + ATP + CoA = succinyl-CoA + ADP + phosphate. The catalysed reaction is GTP + succinate + CoA = succinyl-CoA + GDP + phosphate. It participates in carbohydrate metabolism; tricarboxylic acid cycle; succinate from succinyl-CoA (ligase route): step 1/1. Its function is as follows. Succinyl-CoA synthetase functions in the citric acid cycle (TCA), coupling the hydrolysis of succinyl-CoA to the synthesis of either ATP or GTP and thus represents the only step of substrate-level phosphorylation in the TCA. The beta subunit provides nucleotide specificity of the enzyme and binds the substrate succinate, while the binding sites for coenzyme A and phosphate are found in the alpha subunit. The polypeptide is Succinate--CoA ligase [ADP-forming] subunit beta (Actinobacillus pleuropneumoniae serotype 5b (strain L20)).